The chain runs to 310 residues: HPr kinase/phosphorylase (310 aa).

Active-site residues include histidine 138 and lysine 159. Position 153 to 160 (153 to 160 (GKSGVGKS)) interacts with ATP. Serine 160 serves as a coordination point for Mg(2+). Aspartate 177 (proton acceptor; for phosphorylation activity. Proton donor; for dephosphorylation activity) is an active-site residue. An important for the catalytic mechanism of both phosphorylation and dephosphorylation region spans residues 201-210 (LEIRGLGIIN). Residue glutamate 202 participates in Mg(2+) binding. The active site involves arginine 243. The segment at 264-269 (PVRPGR) is important for the catalytic mechanism of dephosphorylation.

This sequence belongs to the HPrK/P family. In terms of assembly, homohexamer. The cofactor is Mg(2+).

It catalyses the reaction [HPr protein]-L-serine + ATP = [HPr protein]-O-phospho-L-serine + ADP + H(+). The catalysed reaction is [HPr protein]-O-phospho-L-serine + phosphate + H(+) = [HPr protein]-L-serine + diphosphate. Its function is as follows. Catalyzes the ATP- as well as the pyrophosphate-dependent phosphorylation of a specific serine residue in HPr, a phosphocarrier protein of the phosphoenolpyruvate-dependent sugar phosphotransferase system (PTS). HprK/P also catalyzes the pyrophosphate-producing, inorganic phosphate-dependent dephosphorylation (phosphorolysis) of seryl-phosphorylated HPr (P-Ser-HPr). The two antagonistic activities of HprK/P are regulated by several intracellular metabolites, which change their concentration in response to the absence or presence of rapidly metabolisable carbon sources (glucose, fructose, etc.) in the growth medium. Also phosphorylates/dephosphorylates the HPr-like catabolite repression protein crh on a specific serine residue. Therefore, by controlling the phosphorylation state of HPr and crh, HPrK/P is a sensor enzyme that plays a major role in the regulation of carbon metabolism and sugar transport: it mediates carbon catabolite repression (CCR), and regulates PTS-catalyzed carbohydrate uptake and inducer exclusion. In Bacillus licheniformis (strain ATCC 14580 / DSM 13 / JCM 2505 / CCUG 7422 / NBRC 12200 / NCIMB 9375 / NCTC 10341 / NRRL NRS-1264 / Gibson 46), this protein is HPr kinase/phosphorylase.